The following is a 264-amino-acid chain: tRNA (guanine-N(7)-)-methyltransferase (264 aa).

The interval 1–39 is disordered; sequence MIHDDDPNAPGAPHDDATAAPASATRAAPAAGDDDDANP. A compositionally biased stretch (low complexity) spans 18–31; it reads TAAPASATRAAPAA. Residues glutamate 94, glutamate 119, aspartate 146, and aspartate 169 each coordinate S-adenosyl-L-methionine. Aspartate 169 is an active-site residue. Residues lysine 173, aspartate 205, and 240-243 each bind substrate; that span reads TKFE.

The protein belongs to the class I-like SAM-binding methyltransferase superfamily. TrmB family.

It carries out the reaction guanosine(46) in tRNA + S-adenosyl-L-methionine = N(7)-methylguanosine(46) in tRNA + S-adenosyl-L-homocysteine. It participates in tRNA modification; N(7)-methylguanine-tRNA biosynthesis. Its function is as follows. Catalyzes the formation of N(7)-methylguanine at position 46 (m7G46) in tRNA. The protein is tRNA (guanine-N(7)-)-methyltransferase of Burkholderia mallei (strain ATCC 23344).